The primary structure comprises 1264 residues: Protein kibra (1264 aa).

The span at 1-14 (MSNQQQQQLPRQLP) shows a compositional bias: low complexity. The segment at 1–40 (MSNQQQQQLPRQLPQPHPHHHHHHHQQQPGQHSEFPLPDG) is disordered. Residues 17-26 (HPHHHHHHHQ) show a composition bias toward basic residues. 2 WW domains span residues 35–68 (FPLPDGWDIARDFDGKTYYIDHINKKTTWLDPRD) and 82–115 (DELPVGWEEAYDSNIGRYYINHIAQTTQLEDPRQ). 3 coiled-coil regions span residues 129–215 (LSAA…YTER), 258–288 (EKVREELMRSLVQIKNELSRQQINEENAELL), and 319–445 (AEMA…RLKS). The span at 513–544 (PAVQLQQQHQLQQQTQPQPASEVSLSPRSSLS) shows a compositional bias: low complexity. The interval 513 to 545 (PAVQLQQQHQLQQQTQPQPASEVSLSPRSSLSI) is disordered. Residues 691 to 811 (ELAQVQIGLK…NPDDSTLKWY (121 aa)) enclose the C2 domain. Low complexity-rich tracts occupy residues 845-856 (IINNNNNNNNNN) and 864-876 (ESTITSSQTSTLT). Disordered stretches follow at residues 845–880 (IINNNNNNNNNNIREESSDESTITSSQTSTLTRNQA) and 1200–1254 (RNKN…RYDY).

Belongs to the WWC family. KIBRA subfamily. In terms of assembly, forms a complex with Mer and Ex. Interacts (via domain WW 1) with Ex (via RXPPXY motif). Interacts with Mer, Sav, Hpo and Wts.

The protein resides in the cytoplasm. It is found in the apical cell membrane. Regulator of the Hippo/SWH (Sav/Wts/Hpo) signaling pathway, a signaling pathway that plays a pivotal role in organ size control and tumor suppression by restricting proliferation and promoting apoptosis. The core of this pathway is composed of a kinase cascade wherein Hippo (Hpo), in complex with its regulatory protein Salvador (Sav), phosphorylates and activates Warts (Wts) in complex with its regulatory protein Mats, which in turn phosphorylates and inactivates the Yorkie (Yki) oncoprotein. Kibra acts synergistically along with Ex and Mer to regulate the Hippo signaling pathway. The chain is Protein kibra (Kibra) from Drosophila mojavensis (Fruit fly).